We begin with the raw amino-acid sequence, 194 residues long: MREFSQIRETTETKIKLSLQLDEGKNVSVQTGVGFFDHMLTLFARHGRFGLQVEAEGDVFVDAHHTVEDVGIVLGNCLKEALQNKEGINRYGSAYVPMDESLGFVAIDISGRSYIVFQGELTNPKLGDFDTELTEEFFRAVAHAANITLHARILYGSNTHHKIEALFKAFGRALREAVERNAHITGVNSTKGML.

The protein belongs to the imidazoleglycerol-phosphate dehydratase family.

The protein resides in the cytoplasm. The enzyme catalyses D-erythro-1-(imidazol-4-yl)glycerol 3-phosphate = 3-(imidazol-4-yl)-2-oxopropyl phosphate + H2O. It functions in the pathway amino-acid biosynthesis; L-histidine biosynthesis; L-histidine from 5-phospho-alpha-D-ribose 1-diphosphate: step 6/9. This Bacillus cereus (strain ZK / E33L) protein is Imidazoleglycerol-phosphate dehydratase.